The chain runs to 54 residues: Large ribosomal subunit protein bL33 (54 aa).

This sequence belongs to the bacterial ribosomal protein bL33 family.

In Chloroflexus aggregans (strain MD-66 / DSM 9485), this protein is Large ribosomal subunit protein bL33.